We begin with the raw amino-acid sequence, 398 residues long: Enoyl-[acyl-carrier-protein] reductase [NADH] (398 aa).

Residues 48–53 (GASTGY), 74–75 (FE), 111–112 (DA), and 139–140 (LA) contribute to the NAD(+) site. Tyr225 provides a ligand contact to substrate. Tyr235 acts as the Proton donor in catalysis. Residues Lys244 and 273–275 (VVT) contribute to the NAD(+) site.

It belongs to the TER reductase family. As to quaternary structure, monomer.

It carries out the reaction a 2,3-saturated acyl-[ACP] + NAD(+) = a (2E)-enoyl-[ACP] + NADH + H(+). The protein operates within lipid metabolism; fatty acid biosynthesis. Functionally, involved in the final reduction of the elongation cycle of fatty acid synthesis (FAS II). Catalyzes the reduction of a carbon-carbon double bond in an enoyl moiety that is covalently linked to an acyl carrier protein (ACP). The protein is Enoyl-[acyl-carrier-protein] reductase [NADH] of Paraburkholderia phytofirmans (strain DSM 17436 / LMG 22146 / PsJN) (Burkholderia phytofirmans).